The following is a 227-amino-acid chain: 2,3-bisphosphoglycerate-dependent phosphoglycerate mutase (227 aa).

Residues R7–N14, T20–G21, R59, E86–Y89, K97, R113–R114, and G182–N183 each bind substrate. The Tele-phosphohistidine intermediate role is filled by H8. The active-site Proton donor/acceptor is E86.

It belongs to the phosphoglycerate mutase family. BPG-dependent PGAM subfamily. Homodimer.

It carries out the reaction (2R)-2-phosphoglycerate = (2R)-3-phosphoglycerate. It functions in the pathway carbohydrate degradation; glycolysis; pyruvate from D-glyceraldehyde 3-phosphate: step 3/5. Functionally, catalyzes the interconversion of 2-phosphoglycerate and 3-phosphoglycerate. The chain is 2,3-bisphosphoglycerate-dependent phosphoglycerate mutase from Mannheimia succiniciproducens (strain KCTC 0769BP / MBEL55E).